The primary structure comprises 450 residues: MSEMTPREIVDELNRHIIGQDKAKRAVAVALRNRWRRMQLDDELRQEVTPKNILMIGPTGVGKTEIARRLAKLARAPFIKVEATKFTEVGYVGKEIESIIKDLTDVAVKQTREEMMQKVRYRAEEAAEERILDVLLPPAKTSSSGWAQQQEETPENDDQRGTRQVFRKKLREGQLDDKEIEIDLAMPQMGVEIMAPPGMEEMTSQLQNMFQNMGSDKTKARKMRIKDAYKQLVDEEAAKLLNPDDVKEAAIESVEQNGIVFLDEIDKICKRGDTSGPDVSREGVQRDLLPLVEGTTVNTKHGMIKTDHILFIASGAFQMSKPSDLIPELQGRLPIRVELEALTSGDFVRILTEPSASLTTQYHALLNTEGVEVSFTEEGIQRIAEVAFHVNETTENIGARRLHTVLERLMEEISFHATDHSGEKLVIDADYVNEHVGELSQDEDLSRFIL.

Residues I18 and 60-65 contribute to the ATP site; that span reads GVGKTE. The span at 140–151 shows a compositional bias: polar residues; that stretch reads KTSSSGWAQQQE. The disordered stretch occupies residues 140-162; that stretch reads KTSSSGWAQQQEETPENDDQRGT. ATP is bound by residues D263, E328, and R400.

Belongs to the ClpX chaperone family. HslU subfamily. In terms of assembly, a double ring-shaped homohexamer of HslV is capped on each side by a ring-shaped HslU homohexamer. The assembly of the HslU/HslV complex is dependent on binding of ATP.

The protein localises to the cytoplasm. ATPase subunit of a proteasome-like degradation complex; this subunit has chaperone activity. The binding of ATP and its subsequent hydrolysis by HslU are essential for unfolding of protein substrates subsequently hydrolyzed by HslV. HslU recognizes the N-terminal part of its protein substrates and unfolds these before they are guided to HslV for hydrolysis. The polypeptide is ATP-dependent protease ATPase subunit HslU (Idiomarina loihiensis (strain ATCC BAA-735 / DSM 15497 / L2-TR)).